Consider the following 395-residue polypeptide: Elongation factor Tu (395 aa).

A tr-type G domain is found at 10–205 (KPHVNIGTIG…CDTWIPLPPR (196 aa)). Residues 19 to 26 (GHVDHGKT) form a G1 region. Residue 19–26 (GHVDHGKT) participates in GTP binding. T26 serves as a coordination point for Mg(2+). The G2 stretch occupies residues 60-64 (GITIN). Positions 81 to 84 (DCPG) are G3. GTP is bound by residues 81–85 (DCPGH) and 136–139 (NKCD). Residues 136–139 (NKCD) form a G4 region. The tract at residues 174 to 176 (SAL) is G5.

Belongs to the TRAFAC class translation factor GTPase superfamily. Classic translation factor GTPase family. EF-Tu/EF-1A subfamily. In terms of assembly, monomer.

The protein resides in the cytoplasm. It catalyses the reaction GTP + H2O = GDP + phosphate + H(+). GTP hydrolase that promotes the GTP-dependent binding of aminoacyl-tRNA to the A-site of ribosomes during protein biosynthesis. This chain is Elongation factor Tu, found in Parabacteroides distasonis (strain ATCC 8503 / DSM 20701 / CIP 104284 / JCM 5825 / NCTC 11152).